A 328-amino-acid polypeptide reads, in one-letter code: Nitrilase (328 aa).

The region spanning 9–286 (VRVAAIQAEP…EGILYANVDV (278 aa)) is the CN hydrolase domain. Glu-49 serves as the catalytic Proton acceptor. Lys-131 is a catalytic residue. Catalysis depends on Cys-166, which acts as the Nucleophile.

This sequence belongs to the carbon-nitrogen hydrolase superfamily. Nitrilase family.

It catalyses the reaction a nitrile + 2 H2O = a carboxylate + NH4(+). Functionally, nitrilase that hydrolyzes preferentially 4-cyanopyridine. Is also able to hydrolyze some aliphatic nitriles, such as (R,S)-mandelonitrile. The polypeptide is Nitrilase (Penicillium rubens (strain ATCC 28089 / DSM 1075 / NRRL 1951 / Wisconsin 54-1255) (Penicillium chrysogenum)).